The sequence spans 590 residues: Putative histone-lysine N-methyltransferase PRDM6 (590 aa).

Residues 25–87 (QLFPHGGGGP…STPASSSTSA (63 aa)) are disordered. Over residues 29–42 (HGGGGPLKGGGAAG) the composition is skewed to gly residues. Residues 71 to 87 (ASLSSASSTPASSSTSA) are compositionally biased toward low complexity. The 120-residue stretch at 241 to 360 (REVCLCTSTV…RGTELLVWYN (120 aa)) folds into the SET domain. The C2H2-type 1; degenerate zinc-finger motif lies at 468-490 (WKCGQCFKTFTQRILLQMHVCTQ). 2 C2H2-type zinc fingers span residues 496-518 (YQCG…VVTH) and 524-546 (FKCG…IRTH). The C2H2-type 4; degenerate zinc-finger motif lies at 552 to 574 (FKCERCERSFTQATQLSRHQRMP).

This sequence belongs to the class V-like SAM-binding methyltransferase superfamily. Interacts with HDAC1, HDAC2, HDAC3, CBX1 and EP300.

It localises to the nucleus. It catalyses the reaction L-lysyl(20)-[histone H4] + S-adenosyl-L-methionine = N(6)-methyl-L-lysyl(20)-[histone H4] + S-adenosyl-L-homocysteine + H(+). Putative histone methyltransferase that acts as a transcriptional repressor of smooth muscle gene expression. Promotes the transition from differentiated to proliferative smooth muscle by suppressing differentiation and maintaining the proliferative potential of vascular smooth muscle cells. Also plays a role in endothelial cells by inhibiting endothelial cell proliferation, survival and differentiation. It is unclear whether it has histone methyltransferase activity in vivo. According to some authors, it does not act as a histone methyltransferase by itself and represses transcription by recruiting EHMT2/G9a. According to others, it possesses histone methyltransferase activity when associated with other proteins and specifically methylates 'Lys-20' of histone H4 in vitro. 'Lys-20' methylation represents a specific tag for epigenetic transcriptional repression. This chain is Putative histone-lysine N-methyltransferase PRDM6 (PRDM6), found in Bos taurus (Bovine).